Here is a 76-residue protein sequence, read N- to C-terminus: U14-hexatoxin-Hi1a (76 aa).

The N-terminal stretch at 1-18 is a signal peptide; that stretch reads MMQLAVLICLSLVVNTFA. Cystine bridges form between Cys21–Cys34, Cys27–Cys39, and Cys33–Cys61.

As to expression, expressed by the venom gland.

It is found in the secreted. Its function is as follows. Probable ion channel inhibitor. The chain is U14-hexatoxin-Hi1a from Hadronyche infensa (Fraser island funnel-web spider).